Reading from the N-terminus, the 973-residue chain is Sodium/calcium exchanger 1 (973 aa).

A signal peptide spans methionine 1 to alanine 35. Residues glutamate 36–lysine 74 lie on the Extracellular side of the membrane. An N-linked (GlcNAc...) asparagine glycan is attached at asparagine 44. The chain crosses the membrane as a helical span at residues isoleucine 75–isoleucine 95. At alanine 96–asparagine 136 the chain is on the cytoplasmic side. Residues leucine 137–cysteine 157 form a helical membrane-spanning segment. The Alpha-1 repeat unit spans residues alanine 141–isoleucine 181. Residues glycine 158 to threonine 170 lie on the Extracellular side of the membrane. Asparagine 160 carries N-linked (GlcNAc...) asparagine glycosylation. The helical transmembrane segment at isoleucine 171 to proline 191 threads the bilayer. At aspartate 192–phenylalanine 204 the chain is on the cytoplasmic side. A helical membrane pass occupies residues phenylalanine 205–isoleucine 225. Residues serine 226–glutamate 231 are Extracellular-facing. The chain crosses the membrane as a helical span at residues valine 232 to alanine 252. At aspartate 253–glycine 800 the chain is on the cytoplasmic side. The putative calmodulin-binding region stretch occupies residues arginine 254–glycine 273. Phosphoserine is present on residues serine 285 and serine 392. 2 consecutive Calx-beta domains span residues valine 396–serine 496 and alanine 527–glycine 627. Ca(2+) contacts are provided by glutamate 420, aspartate 456, aspartate 481, aspartate 482, isoleucine 484, glutamate 486, glutamate 489, aspartate 533, aspartate 534, aspartate 535, glutamate 551, aspartate 587, aspartate 613, glutamate 614, glutamate 615, and glutamate 718. A helical transmembrane segment spans residues tryptophan 801–leucine 821. The Extracellular portion of the chain corresponds to alanine 822–histidine 824. The helical transmembrane segment at phenylalanine 825 to threonine 845 threads the bilayer. An Alpha-2 repeat occupies alanine 842–valine 878. Residues serine 846 to asparagine 874 are Cytoplasmic-facing. The helical transmembrane segment at alanine 875–alanine 895 threads the bilayer. At asparagine 896 to threonine 906 the chain is on the extracellular side. A helical membrane pass occupies residues leucine 907 to tyrosine 927. At arginine 928–lysine 944 the chain is on the cytoplasmic side. A helical membrane pass occupies residues leucine 945–glutamate 965. The Extracellular segment spans residues alanine 966 to phenylalanine 973.

It belongs to the Ca(2+):cation antiporter (CaCA) (TC 2.A.19) family. SLC8 subfamily. As to expression, detected primarily in heart and at lower levels in brain. Expressed in cardiac sarcolemma, brain, kidney, liver, pancreas, skeletal muscle, placenta and lung.

The protein localises to the cell membrane. The enzyme catalyses Ca(2+)(in) + 3 Na(+)(out) = Ca(2+)(out) + 3 Na(+)(in). With respect to regulation, activated by micromolar levels of Ca(2+). Its function is as follows. Mediates the exchange of one Ca(2+) ion against three to four Na(+) ions across the cell membrane, and thereby contributes to the regulation of cytoplasmic Ca(2+) levels and Ca(2+)-dependent cellular processes. Contributes to Ca(2+) transport during excitation-contraction coupling in muscle. In a first phase, voltage-gated channels mediate the rapid increase of cytoplasmic Ca(2+) levels due to release of Ca(2+) stores from the endoplasmic reticulum. SLC8A1 mediates the export of Ca(2+) from the cell during the next phase, so that cytoplasmic Ca(2+) levels rapidly return to baseline. Required for normal embryonic heart development and the onset of heart contractions. The chain is Sodium/calcium exchanger 1 (SLC8A1) from Homo sapiens (Human).